Consider the following 164-residue polypeptide: MTRKESELEGVTLLGNQGTNYLFEYAPEVLESFPNKHVNRDYFVKFNCPEFTSLCPKTGQPDFATIYISYIPDEKMVESKSLKLYLFSFRNHGDFHEDCMNIIMNDLIELMDPRYIEVWGKFTPRGGISIDPYTNYGRPGTKYEKMAEHRMMNHDMYPETIDNR.

The active-site Thioimide intermediate is Cys55. The active-site Proton donor is the Asp62. Substrate contacts are provided by residues 77-79 (VES) and 96-97 (HE).

It belongs to the GTP cyclohydrolase I family. QueF type 1 subfamily.

It localises to the cytoplasm. The catalysed reaction is 7-aminomethyl-7-carbaguanine + 2 NADP(+) = 7-cyano-7-deazaguanine + 2 NADPH + 3 H(+). Its pathway is tRNA modification; tRNA-queuosine biosynthesis. Its function is as follows. Catalyzes the NADPH-dependent reduction of 7-cyano-7-deazaguanine (preQ0) to 7-aminomethyl-7-deazaguanine (preQ1). In Bacillus velezensis (strain DSM 23117 / BGSC 10A6 / LMG 26770 / FZB42) (Bacillus amyloliquefaciens subsp. plantarum), this protein is NADPH-dependent 7-cyano-7-deazaguanine reductase.